The primary structure comprises 121 residues: Large ribosomal subunit protein bL12 (121 aa).

This sequence belongs to the bacterial ribosomal protein bL12 family. In terms of assembly, homodimer. Part of the ribosomal stalk of the 50S ribosomal subunit. Forms a multimeric L10(L12)X complex, where L10 forms an elongated spine to which 2 to 4 L12 dimers bind in a sequential fashion. Binds GTP-bound translation factors.

In terms of biological role, forms part of the ribosomal stalk which helps the ribosome interact with GTP-bound translation factors. Is thus essential for accurate translation. The sequence is that of Large ribosomal subunit protein bL12 from Escherichia coli O81 (strain ED1a).